A 177-amino-acid polypeptide reads, in one-letter code: ATP synthase subunit delta (177 aa).

It belongs to the ATPase delta chain family. As to quaternary structure, F-type ATPases have 2 components, F(1) - the catalytic core - and F(0) - the membrane proton channel. F(1) has five subunits: alpha(3), beta(3), gamma(1), delta(1), epsilon(1). F(0) has three main subunits: a(1), b(2) and c(10-14). The alpha and beta chains form an alternating ring which encloses part of the gamma chain. F(1) is attached to F(0) by a central stalk formed by the gamma and epsilon chains, while a peripheral stalk is formed by the delta and b chains.

The protein localises to the cell inner membrane. Functionally, f(1)F(0) ATP synthase produces ATP from ADP in the presence of a proton or sodium gradient. F-type ATPases consist of two structural domains, F(1) containing the extramembraneous catalytic core and F(0) containing the membrane proton channel, linked together by a central stalk and a peripheral stalk. During catalysis, ATP synthesis in the catalytic domain of F(1) is coupled via a rotary mechanism of the central stalk subunits to proton translocation. This protein is part of the stalk that links CF(0) to CF(1). It either transmits conformational changes from CF(0) to CF(1) or is implicated in proton conduction. This Shewanella amazonensis (strain ATCC BAA-1098 / SB2B) protein is ATP synthase subunit delta.